Consider the following 204-residue polypeptide: Matrix-remodeling-associated protein 7 (204 aa).

A helical transmembrane segment spans residues 7-27 (LLAALPALATALALLLAWLLV). The interval 32 to 148 (AASPEPARAP…FSFKYSPGKL (117 aa)) is disordered. The segment covering 38–47 (ARAPPEPAPP) has biased composition (pro residues). Residues 63 to 103 (EPAASPAGPEEPGEPAGLGELGEPAGPGEPEGPGDPAAAPA) show a composition bias toward low complexity. Residues 110–126 (VEARQEEEQDLDGEKGP) are compositionally biased toward basic and acidic residues. At Ser-191 the chain carries Phosphoserine.

The protein localises to the membrane. The protein is Matrix-remodeling-associated protein 7 (MXRA7) of Homo sapiens (Human).